A 206-amino-acid polypeptide reads, in one-letter code: Na(+)-translocating NADH-quinone reductase subunit E (206 aa).

The next 6 helical transmembrane spans lie at 12–32 (AVFV…FIAI), 36–56 (IQTA…TVPV), 85–105 (FLGL…LEMT), 118–138 (GIFL…LFMV), 148–168 (VVYG…LAGI), and 184–204 (LGIT…FSGV).

The protein belongs to the NqrDE/RnfAE family. As to quaternary structure, composed of six subunits; NqrA, NqrB, NqrC, NqrD, NqrE and NqrF.

The protein localises to the cell inner membrane. It carries out the reaction a ubiquinone + n Na(+)(in) + NADH + H(+) = a ubiquinol + n Na(+)(out) + NAD(+). Functionally, NQR complex catalyzes the reduction of ubiquinone-1 to ubiquinol by two successive reactions, coupled with the transport of Na(+) ions from the cytoplasm to the periplasm. NqrA to NqrE are probably involved in the second step, the conversion of ubisemiquinone to ubiquinol. The sequence is that of Na(+)-translocating NADH-quinone reductase subunit E from Alcanivorax borkumensis (strain ATCC 700651 / DSM 11573 / NCIMB 13689 / SK2).